The primary structure comprises 196 residues: Putative HTH-type transcriptional regulator protein PtxE (196 aa).

Residues 1–59 (MLNPVWLKSLVAIVQTGSFQSAARALGLAQPTVSQHLQKLEEQVGVTLVQRSRSGCQPT) form the HTH lysR-type domain. The H-T-H motif DNA-binding region spans 19–38 (FQSAARALGLAQPTVSQHLQ).

It belongs to the LysR transcriptional regulatory family.

The sequence is that of Putative HTH-type transcriptional regulator protein PtxE (ptxE) from Stutzerimonas stutzeri (Pseudomonas stutzeri).